A 359-amino-acid polypeptide reads, in one-letter code: Putative cyclin-F1-2 (359 aa).

Belongs to the cyclin family. Cyclin F subfamily.

This Oryza sativa subsp. japonica (Rice) protein is Putative cyclin-F1-2 (CYCF1-2).